Consider the following 557-residue polypeptide: Arginine--tRNA ligase (557 aa).

The short motif at 128-138 (ANPTGPLHVGH) is the 'HIGH' region element.

It belongs to the class-I aminoacyl-tRNA synthetase family. Monomer.

Its subcellular location is the cytoplasm. The enzyme catalyses tRNA(Arg) + L-arginine + ATP = L-arginyl-tRNA(Arg) + AMP + diphosphate. This is Arginine--tRNA ligase from Thiobacillus denitrificans (strain ATCC 25259 / T1).